A 205-amino-acid polypeptide reads, in one-letter code: Thymidine kinase (205 aa).

Residues 9–16 (SAMNAGKS) and 87–90 (DECQ) each bind ATP. The active-site Proton acceptor is glutamate 88. Zn(2+)-binding residues include cysteine 145, cysteine 147, cysteine 182, and histidine 185.

Belongs to the thymidine kinase family. In terms of assembly, homotetramer.

It is found in the cytoplasm. It carries out the reaction thymidine + ATP = dTMP + ADP + H(+). The protein is Thymidine kinase of Shigella dysenteriae serotype 1 (strain Sd197).